Reading from the N-terminus, the 1335-residue chain is Protein SPATA31F1 (1335 aa).

The chain crosses the membrane as a helical span at residues 8–28 (LWEVGYPLYIYGSIFIVIVII). 5 disordered regions span residues 403 to 424 (ALKALSGPHPQSGGQDNDSGSD), 480 to 502 (LPKTSPQSAPPSSPLSPNWMSPS), 972 to 1002 (VQQNQKQSNSKAVPQGSAHSVSKISQPSGDM), 1019 to 1141 (PSLE…LQDS), and 1248 to 1335 (ENVA…GHPT). Over residues 414-424 (SGGQDNDSGSD) the composition is skewed to polar residues. Over residues 972–1000 (VQQNQKQSNSKAVPQGSAHSVSKISQPSG) the composition is skewed to polar residues. Composition is skewed to basic and acidic residues over residues 1047-1064 (NREDPEETKAARDHREGD), 1071-1083 (STREERRPAEDQR), and 1129-1139 (PGEKESEKDLQ).

It belongs to the SPATA31 family.

It localises to the membrane. This is Protein SPATA31F1 from Homo sapiens (Human).